A 413-amino-acid chain; its full sequence is PCI domain-containing protein 2 homolog (413 aa).

The region spanning Val-222–Ala-403 is the PCI domain.

This sequence belongs to the CSN12 family.

The protein is PCI domain-containing protein 2 homolog of Caenorhabditis elegans.